A 128-amino-acid chain; its full sequence is Elongation factor G (128 aa).

Belongs to the GTP-binding elongation factor family. EF-G/EF-2 subfamily.

The protein localises to the cytoplasm. Its function is as follows. Catalyzes the GTP-dependent ribosomal translocation step during translation elongation. During this step, the ribosome changes from the pre-translocational (PRE) to the post-translocational (POST) state as the newly formed A-site-bound peptidyl-tRNA and P-site-bound deacylated tRNA move to the P and E sites, respectively. Catalyzes the coordinated movement of the two tRNA molecules, the mRNA and conformational changes in the ribosome. The sequence is that of Elongation factor G (fusA) from Planobispora rosea.